The chain runs to 389 residues: Large envelope protein (389 aa).

At M1 the chain carries N-acetylmethionine. G2 carries the N-myristoyl glycine; by host lipid modification. Residues 2-108 (GTNLSVPNPL…PPLRDSHPQA (107 aa)) are pre-S1. Positions 2 to 163 (GTNLSVPNPL…SARTGDPVTI (162 aa)) are pre-S. The Virion surface; in external conformation portion of the chain corresponds to 2–170 (GTNLSVPNPL…VTIMENITSG (169 aa)). Residues 2-242 (GTNLSVPNPL…PGYRWMCLRR (241 aa)) are Intravirion; in internal conformation-facing. A compositionally biased stretch (polar residues) spans 77-95 (VSTIPPPASTNRQSGRQPT). Residues 77–103 (VSTIPPPASTNRQSGRQPTPISPPLRD) are disordered. Positions 109 to 163 (MQWNSTALHQALQDPRVRGLYLPAGGSSSGTVNPAPNIASHISSISARTGDPVTI) are pre-S2. The helical transmembrane segment at 171 to 191 (FLGPLLVLQAGFFLLTRILTI) threads the bilayer. Over 192–242 (PQSLDSWWTSLNFLGGSPVCLGQNSQSPTSNHSPTSCPPICPGYRWMCLRR) the chain is Intravirion; in external conformation. A helical membrane pass occupies residues 243–263 (FIIFLFILLLCLIFLLVLLDY). Over 264–337 (QGMLPVCPLI…WASVRFSWLS (74 aa)) the chain is Virion surface. N309 is a glycosylation site (N-linked (GlcNAc...) asparagine; by host). Residues 338–358 (LLVPFVQWFVGLSPTVWLSAI) traverse the membrane as a helical segment. Residues 359-364 (WMMWYW) lie on the Intravirion side of the membrane. Residues 365–387 (GPSLYSIVSPFIPLLPIFFCLWV) form a helical membrane-spanning segment. The Virion surface portion of the chain corresponds to 388–389 (YI).

The protein belongs to the orthohepadnavirus major surface antigen family. In terms of assembly, in its internal form (Li-HBsAg), interacts with the capsid protein and with the isoform S. Interacts with host chaperone CANX. As to quaternary structure, associates with host chaperone CANX through its pre-S2 N glycan; this association may be essential for isoform M proper secretion. Interacts with isoform L. Interacts with the antigens of satellite virus HDV (HDVAgs); this interaction is required for encapsidation of HDV genomic RNA. Isoform M is N-terminally acetylated by host at a ratio of 90%, and N-glycosylated by host at the pre-S2 region. Post-translationally, myristoylated.

The protein localises to the virion membrane. The large envelope protein exists in two topological conformations, one which is termed 'external' or Le-HBsAg and the other 'internal' or Li-HBsAg. In its external conformation the protein attaches the virus to cell receptors and thereby initiating infection. This interaction determines the species specificity and liver tropism. This attachment induces virion internalization predominantly through caveolin-mediated endocytosis. The large envelope protein also assures fusion between virion membrane and endosomal membrane. In its internal conformation the protein plays a role in virion morphogenesis and mediates the contact with the nucleocapsid like a matrix protein. Its function is as follows. The middle envelope protein plays an important role in the budding of the virion. It is involved in the induction of budding in a nucleocapsid independent way. In this process the majority of envelope proteins bud to form subviral lipoprotein particles of 22 nm of diameter that do not contain a nucleocapsid. The polypeptide is Large envelope protein (Hepatitis B virus genotype A2 subtype adw (isolate Japan/Nishioka/1983) (HBV-A)).